The chain runs to 344 residues: GTPase Obg (344 aa).

The Obg domain maps to 1 to 159 (MKFLDEAKVY…MWLILRLKLI (159 aa)). The 168-residue stretch at 160–327 (ADAGLVGLPN…ALRAIQAQLD (168 aa)) folds into the OBG-type G domain. GTP-binding positions include 166–173 (GLPNAGKS), 191–195 (FTTLH), 212–215 (DIPG), 279–282 (SKAD), and 308–310 (SAA). Mg(2+)-binding residues include serine 173 and threonine 193.

Belongs to the TRAFAC class OBG-HflX-like GTPase superfamily. OBG GTPase family. As to quaternary structure, monomer. Mg(2+) is required as a cofactor.

The protein resides in the cytoplasm. Functionally, an essential GTPase which binds GTP, GDP and possibly (p)ppGpp with moderate affinity, with high nucleotide exchange rates and a fairly low GTP hydrolysis rate. Plays a role in control of the cell cycle, stress response, ribosome biogenesis and in those bacteria that undergo differentiation, in morphogenesis control. The sequence is that of GTPase Obg from Methylorubrum populi (strain ATCC BAA-705 / NCIMB 13946 / BJ001) (Methylobacterium populi).